The following is a 353-amino-acid chain: 2,4-diaminopentanoate dehydrogenase (353 aa).

It belongs to the DapB family. As to quaternary structure, homodimer.

The enzyme catalyses (2R,4S)-2,4-diaminopentanoate + NAD(+) + H2O = (2R)-2-amino-4-oxopentanoate + NH4(+) + NADH + H(+). It carries out the reaction (2R,4S)-2,4-diaminopentanoate + NADP(+) + H2O = (2R)-2-amino-4-oxopentanoate + NH4(+) + NADPH + H(+). Its activity is regulated as follows. Inhibited by p-chloromercuribenzoate, iodoacetate and N-ethylmaleimide. Functionally, involved in the ornithine fermentation pathway. Catalyzes the oxidative deamination of (2R,4S)-2,4-diaminopentanoate (DAP) to yield 2-amino-4-ketopentanoate (AKP). This is 2,4-diaminopentanoate dehydrogenase from Acetoanaerobium sticklandii (strain ATCC 12662 / DSM 519 / JCM 1433 / CCUG 9281 / NCIMB 10654 / HF) (Clostridium sticklandii).